Reading from the N-terminus, the 245-residue chain is uncharacterized protein (245 aa).

One can recognise an HTH gntR-type domain in the interval 29 to 96; it reads RSLIEATFQR…AQRGFHVTPM (68 aa). Residues 56 to 75 constitute a DNA-binding region (H-T-H motif); sequence IEDLKSRYEVSGGTVREALS.

This is an uncharacterized protein from Paraburkholderia xenovorans (strain LB400).